The following is a 352-amino-acid chain: Quinolinate synthase (352 aa).

Residues His48 and Ser69 each contribute to the iminosuccinate site. Cys114 contacts [4Fe-4S] cluster. Iminosuccinate is bound by residues Tyr140–Asn142 and Ser157. Cys201 is a [4Fe-4S] cluster binding site. Iminosuccinate-binding positions include His227–Glu229 and Thr244. Residue Cys298 participates in [4Fe-4S] cluster binding.

This sequence belongs to the quinolinate synthase family. Type 1 subfamily. It depends on [4Fe-4S] cluster as a cofactor.

It localises to the cytoplasm. The catalysed reaction is iminosuccinate + dihydroxyacetone phosphate = quinolinate + phosphate + 2 H2O + H(+). Its pathway is cofactor biosynthesis; NAD(+) biosynthesis; quinolinate from iminoaspartate: step 1/1. Catalyzes the condensation of iminoaspartate with dihydroxyacetone phosphate to form quinolinate. The sequence is that of Quinolinate synthase from Pseudomonas entomophila (strain L48).